Consider the following 633-residue polypeptide: Threonine--tRNA ligase (633 aa).

The 61-residue stretch at 1–61 (MINIYFNNNL…TENCTFEVIT (61 aa)) folds into the TGS domain. Positions 242–533 (DHRKIGKELE…LIEHHSGKFP (292 aa)) are catalytic. Residues cysteine 333, histidine 384, and histidine 510 each coordinate Zn(2+).

Belongs to the class-II aminoacyl-tRNA synthetase family. As to quaternary structure, homodimer. Zn(2+) serves as cofactor.

Its subcellular location is the cytoplasm. The catalysed reaction is tRNA(Thr) + L-threonine + ATP = L-threonyl-tRNA(Thr) + AMP + diphosphate + H(+). Functionally, catalyzes the attachment of threonine to tRNA(Thr) in a two-step reaction: L-threonine is first activated by ATP to form Thr-AMP and then transferred to the acceptor end of tRNA(Thr). Also edits incorrectly charged L-seryl-tRNA(Thr). This chain is Threonine--tRNA ligase, found in Ehrlichia canis (strain Jake).